The sequence spans 553 residues: Putative transport protein YidE (553 aa).

Transmembrane regions (helical) follow at residues 4-24 (IALTVSVLALVAVVGLWIGNI), 28-48 (GVGFGIGGVLFGGIIVGHFVD), 65-85 (FGLILFVYTIGIQVGPGFFAS), 95-115 (LFAVLIVIMGGLVTAILHKIF), and 158-178 (MSYAMAYPFGICGILLTMWLM). 2 RCK C-terminal domains span residues 192–276 (KHES…VIGK) and 279–361 (DTSL…VVGN). Helical transmembrane passes span 371-391 (MLPVFIGIGLGVLLGSIPLFV), 393-413 (GFPVALKLGLAGGPLIMALIL), 437-457 (LGIVLFLAVVGLKSGGDFVDT), 464-484 (LSWIGYGIFITAIPLITIGLL), 493-513 (YLTLCGMLAGSMTDPPALAFA), and 533-553 (LVMFLRIITPQLLAVIFWGMG).

It belongs to the AAE transporter (TC 2.A.81) family. YidE subfamily.

It is found in the cell membrane. The polypeptide is Putative transport protein YidE (Salmonella paratyphi C (strain RKS4594)).